Consider the following 254-residue polypeptide: MASPREENVYMANVAARAERYEEMVEFMEKVVAALDTELTVEERNLLSVAYKNVIGARRASWRIISSIEQKEESRGNEDHVASIKKYRSQIENELTSICNGILKLLDSKLIGSAATGDSKVFYLKMKGDYYRYLAEFKTGTERKEAAENTLSAYKSAQDIANGELAPTHPIRLGLALNFSVFYYEILNSPDRACNLAKQAFDEAIADVDTLGEESYKDSTLIMQLLRDNLTLWTSDMQDDGADEIKEPSKADNE.

This sequence belongs to the 14-3-3 family.

This Solanum tuberosum (Potato) protein is 14-3-3-like protein RA215.